A 244-amino-acid polypeptide reads, in one-letter code: 1-(5-phosphoribosyl)-5-[(5-phosphoribosylamino)methylideneamino] imidazole-4-carboxamide isomerase (244 aa).

The active-site Proton acceptor is the Asp-10. The Proton donor role is filled by Asp-132.

It belongs to the HisA/HisF family.

It localises to the cytoplasm. The enzyme catalyses 1-(5-phospho-beta-D-ribosyl)-5-[(5-phospho-beta-D-ribosylamino)methylideneamino]imidazole-4-carboxamide = 5-[(5-phospho-1-deoxy-D-ribulos-1-ylimino)methylamino]-1-(5-phospho-beta-D-ribosyl)imidazole-4-carboxamide. It participates in amino-acid biosynthesis; L-histidine biosynthesis; L-histidine from 5-phospho-alpha-D-ribose 1-diphosphate: step 4/9. The protein is 1-(5-phosphoribosyl)-5-[(5-phosphoribosylamino)methylideneamino] imidazole-4-carboxamide isomerase of Stenotrophomonas maltophilia (strain R551-3).